The sequence spans 157 residues: Protein Smg (157 aa).

It belongs to the Smg family.

The protein is Protein Smg of Sodalis glossinidius (strain morsitans).